Reading from the N-terminus, the 887-residue chain is Degenerin-like protein unc-105 (887 aa).

Residues 1–33 form a disordered region; that stretch reads MAEDRIKSKLRRPASIESTMSSRTKPRHKPSPM. Residues 1 to 93 lie on the Cytoplasmic side of the membrane; that stretch reads MAEDRIKSKL…AATADGKWRW (93 aa). A helical membrane pass occupies residues 94 to 114; the sequence is FWYTAFTICLLALLIQIFFLI. Residues 115 to 698 are Extracellular-facing; the sequence is SKYRQYGKTV…SVLADLGGLT (584 aa). 5 N-linked (GlcNAc...) asparagine glycosylation sites follow: N244, N450, N473, N581, and N599. A helical membrane pass occupies residues 699 to 719; it reads GLWIGASVVSLLEIVTLIVFA. The Cytoplasmic portion of the chain corresponds to 720 to 887; it reads TQAYVRKRKG…YSAPYEHRKK (168 aa). 2 disordered regions span residues 794–815 and 859–887; these read AIQEQSDDEEETTESSRTNGSC and SNSEEEDAEDEVHREPEPFYSAPYEHRKK.

This sequence belongs to the amiloride-sensitive sodium channel (TC 1.A.6) family. Expressed in body wall muscle.

Its subcellular location is the membrane. Ion channel which is permeable to small monovalent cations. Shown not to be H+-ion gated. May be mechanosensitive and is required for growth and muscle development. The polypeptide is Degenerin-like protein unc-105 (unc-105) (Caenorhabditis elegans).